Reading from the N-terminus, the 898-residue chain is Endoplasmic reticulum metallopeptidase 1 (898 aa).

Met1 bears the N-acetylmethionine mark. Residues Met1–Lys59 form a disordered region. Topologically, residues Met1–Arg66 are cytoplasmic. The segment covering Glu37 to Gly57 has biased composition (basic and acidic residues). Residues Thr67–Gln87 form a helical membrane-spanning segment. Topologically, residues Arg88 to Met393 are lumenal. N-linked (GlcNAc...) asparagine glycosylation is present at Asn176. Cysteines 198 and 216 form a disulfide. Zn(2+)-binding residues include His199 and Asp211. The active-site Proton acceptor is Glu245. Positions 246, 272, and 348 each coordinate Zn(2+). A helical membrane pass occupies residues Val394–Ile414. Residues Asn415 to Thr451 are Cytoplasmic-facing. A helical membrane pass occupies residues Phe452–Ile472. The Lumenal portion of the chain corresponds to Gly473–Asn480. A helical membrane pass occupies residues Tyr481–His501. Residues Thr502 to Leu515 are Cytoplasmic-facing. Residues Tyr516–Ala538 form a helical membrane-spanning segment. Residues Gln539–Cys542 are Lumenal-facing. The helical transmembrane segment at Ser543 to Tyr562 threads the bilayer. The Cytoplasmic portion of the chain corresponds to Lys563–Arg573. The chain crosses the membrane as a helical span at residues Phe574–Trp594. The Lumenal portion of the chain corresponds to Ala595–Val615. Residues Val616–Ile636 form a helical membrane-spanning segment. Residues Tyr637–Thr645 lie on the Cytoplasmic side of the membrane. Residues Ile646–Phe666 traverse the membrane as a helical segment. Residues Pro667–Phe898 lie on the Lumenal side of the membrane. The N-linked (GlcNAc...) asparagine glycan is linked to Asn724.

Belongs to the peptidase M28 family. It depends on Zn(2+) as a cofactor. Widely expressed, with highest levels in ovary, kidney, hypothalamus and hippocampus. Within the ovarian follicle, expressed in granulosa cells, but not in oocytes. Present in both preantral and antral follicles, but not in atretic antral follicle.

It localises to the endoplasmic reticulum membrane. Functionally, within the ovary, required for the organization of somatic cells and oocytes into discrete follicular structures. The chain is Endoplasmic reticulum metallopeptidase 1 from Rattus norvegicus (Rat).